The primary structure comprises 455 residues: Bleomycin hydrolase (455 aa).

Catalysis depends on residues C73, H372, and N396.

This sequence belongs to the peptidase C1 family. As to quaternary structure, homooctamer.

The protein localises to the cytoplasm. The catalysed reaction is Inactivates bleomycin B2 (a cytotoxic glycometallopeptide) by hydrolysis of a carboxyamide bond of beta-aminoalanine, but also shows general aminopeptidase activity. The specificity varies somewhat with source, but amino acid arylamides of Met, Leu and Ala are preferred.. The normal physiological role of BLM hydrolase is unknown, but it catalyzes the inactivation of the antitumor drug BLM (a glycopeptide) by hydrolyzing the carboxamide bond of its B-aminoalaninamide moiety thus protecting normal and malignant cells from BLM toxicity. This chain is Bleomycin hydrolase (BLMH), found in Gallus gallus (Chicken).